The sequence spans 121 residues: Flagellar protein FliT (121 aa).

Residues 1 to 50 (MNHAPHLYFAWQQLVEKSQLMLRLATEEQWDELIASEMAYVNAVQEIAHL) form a required for homodimerization region. Residues 60–98 (MQEQLRPMLRLILDNESKVKQLLQIRMDELAKLVGQSSV) form a fliD binding region.

It belongs to the FliT family. As to quaternary structure, homodimer. Interacts with FliD and FlhC.

It is found in the cytoplasm. It localises to the cytosol. In terms of biological role, dual-function protein that regulates the transcription of class 2 flagellar operons and that also acts as an export chaperone for the filament-capping protein FliD. As a transcriptional regulator, acts as an anti-FlhDC factor; it directly binds FlhC, thus inhibiting the binding of the FlhC/FlhD complex to class 2 promoters, resulting in decreased expression of class 2 flagellar operons. As a chaperone, effects FliD transition to the membrane by preventing its premature polymerization, and by directing it to the export apparatus. This chain is Flagellar protein FliT, found in Escherichia coli O139:H28 (strain E24377A / ETEC).